Here is a 458-residue protein sequence, read N- to C-terminus: Bifunctional protein GlmU (458 aa).

The interval 1–232 is pyrophosphorylase; the sequence is MTSSLSVIIL…TFEIEGVNNR (232 aa). Residues 10 to 13, Lys-24, Gln-79, 84 to 85, 106 to 108, Gly-142, Glu-157, Asn-172, and Asn-230 contribute to the UDP-N-acetyl-alpha-D-glucosamine site; these read LAAG, GT, and YGD. Asp-108 contributes to the Mg(2+) binding site. Asn-230 contributes to the Mg(2+) binding site. Residues 233–253 are linker; sequence QQLASLERTWQGKLVADLQEA. An N-acetyltransferase region spans residues 254 to 458; the sequence is GVQFADPTRV…KNDFKRPTKK (205 aa). UDP-N-acetyl-alpha-D-glucosamine is bound by residues Arg-336 and Lys-354. The active-site Proton acceptor is the His-366. Residues Tyr-369 and Asn-380 each contribute to the UDP-N-acetyl-alpha-D-glucosamine site. Acetyl-CoA-binding positions include Ala-383, 389–390, Ser-408, Ala-426, and Arg-443; that span reads NY.

In the N-terminal section; belongs to the N-acetylglucosamine-1-phosphate uridyltransferase family. The protein in the C-terminal section; belongs to the transferase hexapeptide repeat family. As to quaternary structure, homotrimer. It depends on Mg(2+) as a cofactor.

It is found in the cytoplasm. The enzyme catalyses alpha-D-glucosamine 1-phosphate + acetyl-CoA = N-acetyl-alpha-D-glucosamine 1-phosphate + CoA + H(+). The catalysed reaction is N-acetyl-alpha-D-glucosamine 1-phosphate + UTP + H(+) = UDP-N-acetyl-alpha-D-glucosamine + diphosphate. It functions in the pathway nucleotide-sugar biosynthesis; UDP-N-acetyl-alpha-D-glucosamine biosynthesis; N-acetyl-alpha-D-glucosamine 1-phosphate from alpha-D-glucosamine 6-phosphate (route II): step 2/2. The protein operates within nucleotide-sugar biosynthesis; UDP-N-acetyl-alpha-D-glucosamine biosynthesis; UDP-N-acetyl-alpha-D-glucosamine from N-acetyl-alpha-D-glucosamine 1-phosphate: step 1/1. Its pathway is bacterial outer membrane biogenesis; LPS lipid A biosynthesis. In terms of biological role, catalyzes the last two sequential reactions in the de novo biosynthetic pathway for UDP-N-acetylglucosamine (UDP-GlcNAc). The C-terminal domain catalyzes the transfer of acetyl group from acetyl coenzyme A to glucosamine-1-phosphate (GlcN-1-P) to produce N-acetylglucosamine-1-phosphate (GlcNAc-1-P), which is converted into UDP-GlcNAc by the transfer of uridine 5-monophosphate (from uridine 5-triphosphate), a reaction catalyzed by the N-terminal domain. In Psychrobacter cryohalolentis (strain ATCC BAA-1226 / DSM 17306 / VKM B-2378 / K5), this protein is Bifunctional protein GlmU.